The following is a 508-amino-acid chain: Photosystem II CP47 reaction center protein (508 aa).

6 consecutive transmembrane segments (helical) span residues 21–36, 101–115, 140–156, 203–218, 237–252, and 457–472; these read SVHI…WAGS, IVFS…IWHW, GIHL…FGAF, IAAG…FHLS, VLSS…AFVV, and SFAL…HGAR.

Belongs to the PsbB/PsbC family. PsbB subfamily. As to quaternary structure, PSII is composed of 1 copy each of membrane proteins PsbA, PsbB, PsbC, PsbD, PsbE, PsbF, PsbH, PsbI, PsbJ, PsbK, PsbL, PsbM, PsbT, PsbX, PsbY, PsbZ, Psb30/Ycf12, at least 3 peripheral proteins of the oxygen-evolving complex and a large number of cofactors. It forms dimeric complexes. Binds multiple chlorophylls. PSII binds additional chlorophylls, carotenoids and specific lipids. serves as cofactor.

It is found in the plastid. The protein resides in the chloroplast thylakoid membrane. Functionally, one of the components of the core complex of photosystem II (PSII). It binds chlorophyll and helps catalyze the primary light-induced photochemical processes of PSII. PSII is a light-driven water:plastoquinone oxidoreductase, using light energy to abstract electrons from H(2)O, generating O(2) and a proton gradient subsequently used for ATP formation. This is Photosystem II CP47 reaction center protein from Morus indica (Mulberry).